The following is a 339-amino-acid chain: Inositol 2-dehydrogenase (339 aa).

Belongs to the Gfo/Idh/MocA family. As to quaternary structure, homotetramer.

It catalyses the reaction myo-inositol + NAD(+) = scyllo-inosose + NADH + H(+). Functionally, involved in the oxidation of myo-inositol (MI) to 2-keto-myo-inositol (2KMI or 2-inosose). This Leifsonia xyli subsp. xyli (strain CTCB07) protein is Inositol 2-dehydrogenase.